The sequence spans 168 residues: uncharacterized protein (168 aa).

The or 19 signal peptide spans 1–21 (MKLLKALAVLSLATISSHSFA).

This is an uncharacterized protein from Haemophilus influenzae (strain ATCC 51907 / DSM 11121 / KW20 / Rd).